Here is a 324-residue protein sequence, read N- to C-terminus: uncharacterized protein (324 aa).

This is an uncharacterized protein from Dryophytes versicolor (chameleon treefrog).